The chain runs to 988 residues: Ubiquitin carboxyl-terminal hydrolase 36 (988 aa).

The tract at residues Pro16 to Arg55 is disordered. The segment covering His31–Asn48 has biased composition (low complexity). The 309-residue stretch at Thr78–Asp386 folds into the USP domain. Residue Cys87 is the Nucleophile of the active site. His345 (proton acceptor) is an active-site residue. 3 disordered regions span residues Pro393–Pro422, Ala483–Asn782, and Glu868–Thr988. Composition is skewed to low complexity over residues Ser408 to Pro422 and Asn490 to Asn509. A phosphoserine mark is found at Ser419 and Ser421. Residues Thr532 to Glu544 are compositionally biased toward polar residues. Phosphothreonine occurs at positions 561 and 565. A phosphoserine mark is found at Ser575 and Ser577. The segment covering Glu592 to Gln601 has biased composition (acidic residues). Residues Glu602 to Lys631 are compositionally biased toward polar residues. Residues Gln632–Asp649 show a composition bias toward basic and acidic residues. Ser650 is modified (phosphoserine). Residues Ser650–Pro659 are compositionally biased toward acidic residues. Low complexity predominate over residues Pro669–Ala679. Over residues Pro680 to Pro689 the composition is skewed to pro residues. Residue Ser682 is modified to Phosphoserine. Thr685 is modified (phosphothreonine). Ser688 is subject to Phosphoserine. Over residues Val707–Val717 the composition is skewed to acidic residues. Thr728 carries the phosphothreonine modification. The segment covering Asn735–Pro747 has biased composition (polar residues). Phosphoserine is present on Ser746. Thr749 carries the post-translational modification Phosphothreonine. Residues Ala762–Asn782 are compositionally biased toward polar residues. 2 stretches are compositionally biased toward low complexity: residues Ser892–Ser903 and Arg930–Arg943.

The protein belongs to the peptidase C19 family. In terms of assembly, interacts with atms/PAF1, but not with CycT.

Its subcellular location is the nucleus. The protein localises to the nucleolus. It carries out the reaction Thiol-dependent hydrolysis of ester, thioester, amide, peptide and isopeptide bonds formed by the C-terminal Gly of ubiquitin (a 76-residue protein attached to proteins as an intracellular targeting signal).. Its function is as follows. Required for maintaining multiple types of adult stem cells, including male and female germline, epithelial follicle cell and intestinal stem cells. May function as a transcriptional repressor by continually deubiquiting histone H2B at the promoters of genes critical for cellular differentiation, thereby preventing histone H3 'Lys-4' trimethylation (H3K4). Controls selective autophagy activation by ubiquitinated proteins. The sequence is that of Ubiquitin carboxyl-terminal hydrolase 36 (Usp36) from Drosophila simulans (Fruit fly).